Here is a 445-residue protein sequence, read N- to C-terminus: tRNA-2-methylthio-N(6)-dimethylallyladenosine synthase (445 aa).

An MTTase N-terminal domain is found at 2–117 (QGLYIKSYGC…LPELIVKARK (116 aa)). [4Fe-4S] cluster is bound by residues Cys-11, Cys-47, Cys-80, Cys-157, Cys-161, and Cys-164. A Radical SAM core domain is found at 143–374 (KNQKVSAFIS…QELVHKQQLE (232 aa)). The TRAM domain occupies 377 to 441 (KKMIGETHPV…KNHLTGIIPN (65 aa)).

It belongs to the methylthiotransferase family. MiaB subfamily. In terms of assembly, monomer. [4Fe-4S] cluster is required as a cofactor.

It is found in the cytoplasm. It catalyses the reaction N(6)-dimethylallyladenosine(37) in tRNA + (sulfur carrier)-SH + AH2 + 2 S-adenosyl-L-methionine = 2-methylsulfanyl-N(6)-dimethylallyladenosine(37) in tRNA + (sulfur carrier)-H + 5'-deoxyadenosine + L-methionine + A + S-adenosyl-L-homocysteine + 2 H(+). Its function is as follows. Catalyzes the methylthiolation of N6-(dimethylallyl)adenosine (i(6)A), leading to the formation of 2-methylthio-N6-(dimethylallyl)adenosine (ms(2)i(6)A) at position 37 in tRNAs that read codons beginning with uridine. The polypeptide is tRNA-2-methylthio-N(6)-dimethylallyladenosine synthase (Ehrlichia ruminantium (strain Welgevonden)).